Reading from the N-terminus, the 453-residue chain is MTTDTIVAQATAPGRGGVGIIRISGDQASEVAMALLGHIPKTRYADYCDFKDGEGEVIDQGIALYFQGPNSFTGEDVLELQGHGGQIVLDMLIKRVMEVEGIRIAKPGEFSEQAFMNDKLDLTQAEAIADLIDATSEQAAKSALNSLQGEFSTQVHELVDRVTNLRLYVEAAIDFPDEEVDFLSDGKIAGSLYRIITKLDSVQASAKQGAIIREGMKVVIAGRPNAGKSSLLNALAGKESAIVTEIAGTTRDVLREHIHLDGMPLHIIDTAGLRDTADTVEQIGIERAWAEIETADQVLFMVDGTTTDAVDPHEIWPDFIDRLPEKLGITVVRNKADITGEALTVTQDHGHNVFRISAKTGLGVEELQQHLKSLMGYQSNLEGGFIARRRHLEALELATSHLMIGKEQLEVYQAGELLAEELRMTQMALSEITGKFTSDDLLGKIFSSFCIGK.

Arg22, Glu79, and Lys119 together coordinate (6S)-5-formyl-5,6,7,8-tetrahydrofolate. One can recognise a TrmE-type G domain in the interval Gly215–Gly376. Asn225 provides a ligand contact to K(+). GTP contacts are provided by residues Asn225 to Ser230, Thr244 to Thr250, Asp269 to Gly272, and Asn334 to Asp337. Ser229 contributes to the Mg(2+) binding site. Residues Thr244, Ile246, and Thr249 each contribute to the K(+) site. Thr250 contacts Mg(2+). Residue Lys453 participates in (6S)-5-formyl-5,6,7,8-tetrahydrofolate binding.

Belongs to the TRAFAC class TrmE-Era-EngA-EngB-Septin-like GTPase superfamily. TrmE GTPase family. In terms of assembly, homodimer. Heterotetramer of two MnmE and two MnmG subunits. The cofactor is K(+).

Its subcellular location is the cytoplasm. In terms of biological role, exhibits a very high intrinsic GTPase hydrolysis rate. Involved in the addition of a carboxymethylaminomethyl (cmnm) group at the wobble position (U34) of certain tRNAs, forming tRNA-cmnm(5)s(2)U34. The protein is tRNA modification GTPase MnmE of Shewanella sediminis (strain HAW-EB3).